A 1483-amino-acid chain; its full sequence is Guanylyl cyclase, membrane (1483 aa).

6 consecutive transmembrane segments (helical) span residues 50 to 70, 143 to 163, 168 to 188, 198 to 218, 219 to 239, and 242 to 262; these read ISII…YISP, FILR…TFTA, LWKL…LIFE, MVLL…PSML, ASGG…QIAG, and MVLL…ISRF. Residues 323–376 form a disordered region; sequence KKDEESNLTGKKQSKVVVSPPPPPTAAAPQQQDNEISTPQNSRKIVDPQSPSSL. Positions 355–376 are enriched in polar residues; the sequence is DNEISTPQNSRKIVDPQSPSSL. One can recognise a Guanylate cyclase 1 domain in the interval 395-517; the sequence is TVLFCEIVNF…DTINTSSRMA (123 aa). 2 disordered regions span residues 598–619 and 672–838; these read NNTI…THPN and LTSP…GDDF. Positions 610-619 are enriched in polar residues; it reads GSATGPTHPN. Low complexity-rich tracts occupy residues 672–684, 693–712, and 720–765; these read LTSP…PQQS, SPRL…SSST, and NNNN…NNNN. Residues 772–786 are compositionally biased toward polar residues; that stretch reads SPISQNTTPTGSLSL. A run of 6 helical transmembrane segments spans residues 907–927, 982–1002, 1016–1036, 1040–1060, 1061–1081, and 1094–1114; these read ILAS…VDYF, IITG…YVVS, VVMV…SVPP, IPLD…CYNF, SGIK…FIEI, and IYLS…ITSY. Residues 1168–1296 form the Guanylate cyclase 2 domain; the sequence is TIFLSDIVGF…ESVQITQQME (129 aa). The Mg(2+) site is built by Asp-1173, Ile-1174, and Asp-1217. Disordered stretches follow at residues 1348 to 1369 and 1393 to 1483; these read QPEV…SLQY and NQND…SESS. The span at 1354–1369 shows a compositional bias: polar residues; sequence RSVSVSKSNFGGSLQY. The segment covering 1405–1416 has biased composition (low complexity); it reads NENGNESSSSNI. Positions 1432–1444 are enriched in acidic residues; it reads NEDDESSYEDDQE. The segment covering 1446 to 1465 has biased composition (low complexity); sequence NQYLNNSENNKNNNNNSNQI.

It belongs to the adenylyl cyclase class-4/guanylyl cyclase family. Homodimer. Mg(2+) is required as a cofactor.

The protein localises to the membrane. The catalysed reaction is GTP = 3',5'-cyclic GMP + diphosphate. Activated by guanosine 5'-3-O-(thio)triphosphate (GTPgammaS). Inhibited by calcium. In terms of biological role, synthesizes cyclic GMP (cGMP) from GTP, after activation by heterotrimeric or monomeric G proteins. Involved in chemotaxis. The sequence is that of Guanylyl cyclase, membrane (gca) from Dictyostelium discoideum (Social amoeba).